The sequence spans 544 residues: Lariat debranching enzyme (544 aa).

A divalent metal cation contacts are provided by Cys8, His10, Asp39, and Asn84. The segment at Ser124 to Arg154 is lariat recognition loop. Lys128 bears the N6-acetyllysine mark. 3 residues coordinate a divalent metal cation: His174, His226, and His228. Positions Glu395 to Ser412 are enriched in acidic residues. The interval Glu395–Ala463 is disordered. Positions Glu413 to Asn425 are enriched in polar residues. Residues Ile429–Ser439 are compositionally biased toward acidic residues. Residues Ser445–Ala463 are compositionally biased toward polar residues. Phosphoserine occurs at positions 464, 474, 478, 479, 485, 499, and 514. The disordered stretch occupies residues Ile476 to Ala544. Residues Arg512 to Arg522 show a composition bias toward basic and acidic residues.

This sequence belongs to the lariat debranching enzyme family. Fe(2+) serves as cofactor. It depends on Zn(2+) as a cofactor. Requires Mn(2+) as cofactor. As to expression, ubiquitously expressed, strongest expression in the spinal cord and brainstem.

Its subcellular location is the nucleus. Active in presence of diverse metals including Fe(2+), Zn(2+), Mn(2+). Also activated by Ca(2+). Binds two metal cations in two adjacent alpha and beta metal-binding pockets. In terms of biological role, cleaves the 2'-5' phosphodiester linkage at the branch point of excised lariat intron RNA and converts them into linear molecules that can be subsequently degraded, thereby facilitating ribonucleotide turnover. Linked to its role in pre-mRNA processing mechanism, may also participate in retrovirus replication via an RNA lariat intermediate in cDNA synthesis and have an antiviral cell-intrinsic defense function in the brainstem. This chain is Lariat debranching enzyme (DBR1), found in Homo sapiens (Human).